The primary structure comprises 59 residues: Sec-independent protein translocase protein TatA (59 aa).

The helical transmembrane segment at 1–21 (MFSNIGFPGLILILVAVLILF) threads the bilayer.

The protein belongs to the TatA/E family. As to quaternary structure, forms a complex with TatC.

It is found in the cell membrane. Part of the twin-arginine translocation (Tat) system that transports large folded proteins containing a characteristic twin-arginine motif in their signal peptide across membranes. TatA could form the protein-conducting channel of the Tat system. This Bacillus mycoides (strain KBAB4) (Bacillus weihenstephanensis) protein is Sec-independent protein translocase protein TatA.